The primary structure comprises 301 residues: MGGSKMSNDYEIDVEAGMSSLSIVNTPIEAPIVSSYNDRIRPLLDTVDRLRNLNVMREGIQLPTIVVVGDQSSGKSSVLESLAGINLPRGQGICTRVPLVMRLQRSSSPEPEIWLEYSDKVVPTDEEHVAEAICAATDVIAGTGEGVSDTPLTLSVKKNNVPDLTMVDLPGITRVPVNGQPENIYEQISRMIMKYIEPQESIILNVLSATVDFTTCESIRMSRQVDKTGERTLAVVTKADMAPEGLLQKVTADDVSIGLGYICVRNRIGEETYEEARVQEDLLFRTHPLLSLIDGDIVGIL.

The 243-residue stretch at 59–301 folds into the Dynamin-type G domain; the sequence is GIQLPTIVVV…LIDGDIVGIL (243 aa). The tract at residues 69-76 is G1 motif; it reads GDQSSGKS. 69–76 contributes to the GTP binding site; it reads GDQSSGKS. Residues 94–96 form a G2 motif region; it reads CTR. Positions 168-171 are G3 motif; sequence DLPG. GTP contacts are provided by residues 168-172 and 237-240; these read DLPGI and TKAD. A G4 motif region spans residues 237 to 240; that stretch reads TKAD. Position 270 (Glu-270) is a region of interest, G5 motif.

Belongs to the TRAFAC class dynamin-like GTPase superfamily. Dynamin/Fzo/YdjA family.

The chain is Putative dynamin-related protein 4A (DRP4A) from Arabidopsis thaliana (Mouse-ear cress).